Here is a 1333-residue protein sequence, read N- to C-terminus: DNA-directed RNA polymerase subunit beta' (1333 aa).

Zn(2+) is bound by residues Cys-60, Cys-62, Cys-75, and Cys-78. Residues Asp-535, Asp-537, and Asp-539 each contribute to the Mg(2+) site. The Zn(2+) site is built by Cys-901, Cys-983, Cys-990, and Cys-993.

This sequence belongs to the RNA polymerase beta' chain family. In terms of assembly, the RNAP catalytic core consists of 2 alpha, 1 beta, 1 beta' and 1 omega subunit. When a sigma factor is associated with the core the holoenzyme is formed, which can initiate transcription. Mg(2+) serves as cofactor. Requires Zn(2+) as cofactor.

It carries out the reaction RNA(n) + a ribonucleoside 5'-triphosphate = RNA(n+1) + diphosphate. Functionally, DNA-dependent RNA polymerase catalyzes the transcription of DNA into RNA using the four ribonucleoside triphosphates as substrates. This chain is DNA-directed RNA polymerase subunit beta', found in Corynebacterium glutamicum (strain R).